Here is a 173-residue protein sequence, read N- to C-terminus: Small ribosomal subunit protein uS5 (173 aa).

Residues Trp-17–Val-80 form the S5 DRBM domain.

This sequence belongs to the universal ribosomal protein uS5 family. As to quaternary structure, part of the 30S ribosomal subunit. Contacts proteins S4 and S8.

Its function is as follows. With S4 and S12 plays an important role in translational accuracy. Located at the back of the 30S subunit body where it stabilizes the conformation of the head with respect to the body. The polypeptide is Small ribosomal subunit protein uS5 (Picosynechococcus sp. (strain ATCC 27264 / PCC 7002 / PR-6) (Agmenellum quadruplicatum)).